Consider the following 826-residue polypeptide: Breast cancer anti-estrogen resistance protein 3 homolog (826 aa).

The residue at position 2 (Ala-2) is an N-acetylalanine. Phosphoserine occurs at positions 32, 78, 83, and 182. The interval 46-81 is disordered; the sequence is SIHGTLPRKKKGPPPIRSCDNFSHVGTLPHSRSPRH. Residues 154-253 form the SH2 domain; it reads WYHGRIPRQV…QSGAIIFQPV (100 aa). The disordered stretch occupies residues 268-287; it reads ASSPDRAHEGSLTEGRPDAA. At Ser-291 the chain carries Phosphoserine. The disordered stretch occupies residues 294–321; it reads VGGTQAREQGLPRGNLLRNKEKSGSQPA. Residue Lys-335 is modified to N6-methyllysine. Positions 348 to 406 are disordered; it reads KLTPQSPSVGTSPCPNSPVFRTGSEPTLSPAVVRRVSSDARPGEALRGSDSQLCPKPPP. Residues 350-361 show a composition bias toward polar residues; sequence TPQSPSVGTSPC. Phosphoserine occurs at positions 359, 364, 376, and 472. Positions 480-501 are disordered; sequence DDDDRTRPWKPPPAPGDTVGED. Residues 549–819 form the Ras-GEF domain; the sequence is DPKVIAQHLL…TALSRKLEPP (271 aa). Residues 745–749 are mediates the interaction with BCAR1/p130CAS; the sequence is LATAR.

In terms of assembly, part of a complex comprised of PTPRA, BCAR1, BCAR3 (via SH2 domain) and SRC; the formation of the complex is dependent on integrin mediated-tyrosine phosphorylation of PTPRA. Within the complex, interacts (via SH2 domain) with PTPRA (when phosphorylated on 'Tyr-797'). Interacts (via Ras-GEF domain) with BCAR1. Interacts (via Ras-GEF domain) with NEDD9. Interacts with PTK2/FAK1. Interacts with PTPN1. Interacts (via SH2 domain) with EGFR (when tyrosine-phosphorylated). Post-translationally, phosphorylated on tyrosine residues.

It localises to the cytoplasm. Its subcellular location is the cell junction. It is found in the focal adhesion. Functionally, acts as an adapter protein downstream of several growth factor receptors to promote cell proliferation, migration, and redistribution of actin fibers. Specifically involved in INS/insulin signaling pathway by mediating MAPK1/ERK2-MAPK3/ERK1 activation and DNA synthesis. Promotes insulin-mediated membrane ruffling. In response to vasoconstrictor peptide EDN1, involved in the activation of RAP1 downstream of PTK2B via interaction with phosphorylated BCAR1. Inhibits cell migration and invasion via regulation of TGFB-mediated matrix digestion, actin filament rearrangement, and inhibition of invadopodia activity. May inhibit TGFB-SMAD signaling, via facilitating BCAR1 and SMAD2 and/or SMAD3 interaction. Regulates EGF-induced DNA synthesis. Required for the maintenance of ocular lens morphology and structural integrity, potentially via regulation of focal adhesion complex signaling. Acts upstream of PTPRA to regulate the localization of BCAR1 and PTPRA to focal adhesions, via regulation of SRC-mediated phosphorylation of PTPRA. Positively regulates integrin-induced tyrosine phosphorylation of BCAR1. Acts as a guanine nucleotide exchange factor (GEF) for small GTPases RALA, RAP1A and RRAS. However, in a contrasting study, lacks GEF activity towards RAP1. This is Breast cancer anti-estrogen resistance protein 3 homolog (BCAR3) from Bos taurus (Bovine).